Reading from the N-terminus, the 528-residue chain is Butyrophilin subfamily 2 member A2 (528 aa).

The N-terminal stretch at 1-29 (MESAAALHFSRPASLLLLLLLSLCALVSA) is a signal peptide. The Extracellular portion of the chain corresponds to 30-249 (QVTVVGPTDP…SFMPSVSPCA (220 aa)). The region spanning 31-142 (VTVVGPTDPI…SYDEAILHLI (112 aa)) is the Ig-like V-type domain. N-linked (GlcNAc...) asparagine glycans are attached at residues Asn47, Asn115, and Asn121. A disulfide bridge connects residues Cys52 and Cys126. The 83-residue stretch at 150–232 (PLIEMRGHED…NNTLLSQKKE (83 aa)) folds into the Ig-like C2-type domain. A helical membrane pass occupies residues 250–270 (VALPIVVVILMILFAVCMYWI). A coiled-coil region spans residues 270 to 320 (INKLQKEKKILSGEKEFERETREIAVKELEKERVQKEEELQVKEKLQEELR). Residues 271–528 (NKLQKEKKIL…LHRVGTHQSL (258 aa)) lie on the Cytoplasmic side of the membrane. The region spanning 311-507 (VKEKLQEELR…IFICPALTGA (197 aa)) is the B30.2/SPRY domain.

This sequence belongs to the immunoglobulin superfamily. BTN/MOG family. Post-translationally, N-glycosylated.

It localises to the membrane. Inhibits the proliferation of CD4 and CD8 T-cells activated by anti-CD3 antibodies, T-cell metabolism and IL2 and IFNG secretion. The protein is Butyrophilin subfamily 2 member A2 (BTN2A2) of Pongo abelii (Sumatran orangutan).